The primary structure comprises 147 residues: MKLVLQRVKEASVSIDGKIAGAINQGLLLLVGVGPDDNAEDLAYAVRKIVNMRIFSDADGKMNQSIQDIKGSILSVSQFTLYADTKKGNRPAFTGAAKPDLASQLYDSFNEQLAEFVPVERGVFGADMQVSLINDGPVTIILDTKCH.

Positions 136 to 137 match the Gly-cisPro motif, important for rejection of L-amino acids motif; sequence GP.

This sequence belongs to the DTD family. As to quaternary structure, homodimer.

It is found in the cytoplasm. The catalysed reaction is glycyl-tRNA(Ala) + H2O = tRNA(Ala) + glycine + H(+). It catalyses the reaction a D-aminoacyl-tRNA + H2O = a tRNA + a D-alpha-amino acid + H(+). In terms of biological role, an aminoacyl-tRNA editing enzyme that deacylates mischarged D-aminoacyl-tRNAs. Also deacylates mischarged glycyl-tRNA(Ala), protecting cells against glycine mischarging by AlaRS. Acts via tRNA-based rather than protein-based catalysis; rejects L-amino acids rather than detecting D-amino acids in the active site. By recycling D-aminoacyl-tRNA to D-amino acids and free tRNA molecules, this enzyme counteracts the toxicity associated with the formation of D-aminoacyl-tRNA entities in vivo and helps enforce protein L-homochirality. The sequence is that of D-aminoacyl-tRNA deacylase from Streptococcus pyogenes serotype M1.